A 148-amino-acid polypeptide reads, in one-letter code: MPGGDTTPEEAAAPSCAGYNPGLLLFRAQKAQGACVTSTEGAWPRRASALYGGRKMRCGESGAGPDPRSNSAEVSSSQPALASKSQSKWGPTSNNPRGALTTTEFEMAGNRSQNIKHKQTALIAIPMSSQTPRMLGRPRNQGQLYPQP.

The segment at 55–148 (KMRCGESGAG…RNQGQLYPQP (94 aa)) is disordered. Polar residues predominate over residues 68 to 104 (RSNSAEVSSSQPALASKSQSKWGPTSNNPRGALTTTE).

This is an uncharacterized protein from Homo sapiens (Human).